The primary structure comprises 252 residues: Putative phosphonates utilization ATP-binding protein PhnK (252 aa).

The 241-residue stretch at 6 to 246 folds into the ABC transporter domain; sequence LSVNNLTHLY…PHHPYTQLLV (241 aa). Residue 38–45 coordinates ATP; it reads GESGSGKT.

The protein belongs to the ABC transporter superfamily. In terms of assembly, forms a complex with PhnG, PhnH, PhnI and PhnJ with the suggested composition PhnG(4)H(2)I(2)J(2)K.

In terms of biological role, belongs to an operon involved in alkylphosphonate uptake and C-P lyase. Exact function not known. PhnK is not required for the ribophosphonate triphosphate (RPnTP) synthase reaction. The chain is Putative phosphonates utilization ATP-binding protein PhnK (phnK) from Escherichia coli (strain K12).